Here is a 424-residue protein sequence, read N- to C-terminus: Vasopressin V1b receptor (424 aa).

The segment at 1–22 (MDSGPLWDANPTPRGTLSAPNA) is disordered. The Extracellular segment spans residues 1–35 (MDSGPLWDANPTPRGTLSAPNATTPWLGRDEELAK). Residues 13 to 22 (PRGTLSAPNA) are compositionally biased toward polar residues. Asn21 carries N-linked (GlcNAc...) asparagine glycosylation. A helical membrane pass occupies residues 36–59 (VEIGVLATVLVLATGGNLAVLLTL). The Cytoplasmic segment spans residues 60-71 (GQLGRKRSRMHL). Residues 72–93 (FVLHLALTDLAVALFQVLPQLL) form a helical membrane-spanning segment. The Extracellular segment spans residues 94–108 (WDITYRFQGPDLLCR). A disulfide bond links Cys107 and Cys186. Residues 109 to 130 (AVKYLQVLSMFASTYMLLAMTL) traverse the membrane as a helical segment. Over 131-151 (DRYLAVCHPLRSLQQPGQSTY) the chain is Cytoplasmic. Residues 152 to 173 (LLIAAPWLLAAIFSLPQVFIFS) form a helical membrane-spanning segment. Residues 174 to 201 (LREVIQGSGVLDCWADFGFPWGPRAYLT) lie on the Extracellular side of the membrane. Residues 202 to 222 (WTTLAIFVLPVTMLTACYSLI) form a helical membrane-spanning segment. At 223–283 (CHEICKNLKV…RAKIRTVKMT (61 aa)) the chain is on the cytoplasmic side. Residues 284–303 (FVIVLAYIACWAPFFSVQMW) traverse the membrane as a helical segment. Over 304–321 (SVWDKNAPDEDSTNVAFT) the chain is Extracellular. A helical transmembrane segment spans residues 322 to 341 (ISMLLGNLNSCCNPWIYMGF). Residues 342 to 424 (NSHLLPRPLR…GEGTAETIIF (83 aa)) lie on the Cytoplasmic side of the membrane. Positions 398 to 417 (SGRPRPEESPRDLELADGEG) are disordered. A compositionally biased stretch (basic and acidic residues) spans 401–411 (PRPEESPRDLE).

The protein belongs to the G-protein coupled receptor 1 family. Vasopressin/oxytocin receptor subfamily.

Its subcellular location is the cell membrane. Functionally, receptor for arginine vasopressin. The activity of this receptor is mediated by G proteins which activate a phosphatidyl-inositol-calcium second messenger system. Its function is as follows. (Microbial infection) During SARS coronavirus-2/SARS-CoV-2 infection, may recognize and internalize the complex formed by AVP/Arg-vasopressin, SARS-CoV-2 spike protein and secreted ACE2 through DNM2/dynamin 2-dependent endocytosis. This chain is Vasopressin V1b receptor, found in Homo sapiens (Human).